A 706-amino-acid polypeptide reads, in one-letter code: MLVCYSVLACESLWDLPCSIMGSPLGHFTWDKYLKETCSVPAPVHCFKQSYTPPSNEFKISMKLEAQDPRNTTSTCIATVVGLTGARLRLRLDGSDNKNDFWRLVDSSEIQPIGNCEKNGGMLQPPLGFRLNASSWPMFLLKTLNGAEMAPIKIFHKEPPSPSHNFFKMGMKLEAVDRKNPHFICPATIGEVRGAEVLVTFDGWRGAFDYWCRFDSRDIFPVGWCSLTGDNLQPPGTKVVIPKNPSPSSDVSTEKPSIHSTKTVLEHQPGQRGRKPGKKRGRTPKILIPHPTSTPSKSAEPLKFPKKRGPKPGSKRKPRTLLSPPPTSPTTSTPEPDTSTVPQDAATVPSSAMQAPTVCIYLNKSGSTGPHLDKKKIQQLPDHFGPARASVVLQQAVQACIDCAYHQKTVFSFLKQGHGGEVISAVFDREQHTLNLPAVNSITYVLRFLEKLCHNLRSDNLFGNQPFTQTHLSLTATEYNHNHDRYLPGETFVLGNSLARSLETHSDLMDSALKPANLVSTSQNLRTPGYRPLLPSCGLPLSTVSAVRRLCSKGVLKGKKERRDVESFWKLNHSPGSDRHLESRDPPRLSGRDPSSWTVEDVMQFVREADPQLGSHADLFRKHEIDGKALLLLRSDMMMKYMGLKLGPALKLSFHIDRLKQVFWKRETILWSREGLSREVWPISEDTALGHFFSGMDKVFGSLSKR.

MBT repeat units follow at residues 28-126 (FTWD…LQPP) and 134-235 (SSWP…LQPP). Disordered stretches follow at residues 233–350 (QPPG…TVPS) and 576–595 (GSDR…RDPS). Basic residues-rich tracts occupy residues 272–283 (RGRKPGKKRGRT) and 304–319 (FPKK…RKPR). A compositionally biased stretch (low complexity) spans 329 to 340 (PTTSTPEPDTST). Over residues 576 to 591 (GSDRHLESRDPPRLSG) the composition is skewed to basic and acidic residues. Residues 597-662 (WTVEDVMQFV…SFHIDRLKQV (66 aa)) form the SAM domain.

The protein belongs to the SCM family. As to quaternary structure, associates with a PRC1-like complex. Interacts with the SAM domain of PHC1 via its SAM domain in vitro. In terms of tissue distribution, most abundant in testis. Moderate levels detected in heart, brain, lung, liver, skeletal muscle and kidney and lower levels in spleen.

The protein localises to the nucleus. Functionally, associates with Polycomb group (PcG) multiprotein complexes; the complex class is required to maintain the transcriptionally repressive state of some genes. The polypeptide is Polycomb protein SCMH1 (Mus musculus (Mouse)).